We begin with the raw amino-acid sequence, 406 residues long: Tyrosine--tRNA ligase (406 aa).

Residue Y34 participates in L-tyrosine binding. The short motif at 39–48 (PTADSLHVGH) is the 'HIGH' region element. Positions 167 and 171 each coordinate L-tyrosine. Residues 227–231 (KMGKT) carry the 'KMSKS' region motif. An ATP-binding site is contributed by K230. Residues 339-404 (RKIVDVLFEA…GKKEYHRLLV (66 aa)) enclose the S4 RNA-binding domain.

The protein belongs to the class-I aminoacyl-tRNA synthetase family. TyrS type 1 subfamily. In terms of assembly, homodimer.

The protein resides in the cytoplasm. It catalyses the reaction tRNA(Tyr) + L-tyrosine + ATP = L-tyrosyl-tRNA(Tyr) + AMP + diphosphate + H(+). In terms of biological role, catalyzes the attachment of tyrosine to tRNA(Tyr) in a two-step reaction: tyrosine is first activated by ATP to form Tyr-AMP and then transferred to the acceptor end of tRNA(Tyr). This chain is Tyrosine--tRNA ligase, found in Caldanaerobacter subterraneus subsp. tengcongensis (strain DSM 15242 / JCM 11007 / NBRC 100824 / MB4) (Thermoanaerobacter tengcongensis).